The following is a 221-amino-acid chain: Translation initiation factor 6 (221 aa).

It belongs to the eIF-6 family.

Binds to the 50S ribosomal subunit and prevents its association with the 30S ribosomal subunit to form the 70S initiation complex. This chain is Translation initiation factor 6, found in Methanosphaerula palustris (strain ATCC BAA-1556 / DSM 19958 / E1-9c).